Consider the following 404-residue polypeptide: Probable tRNA sulfurtransferase (404 aa).

One can recognise a THUMP domain in the interval 61-166; that stretch reads EAVSERLKDV…SGYSYIMCDE (106 aa). Residues 184–185, 209–210, arginine 266, glycine 288, and glutamine 297 contribute to the ATP site; these read LL and HF.

It belongs to the ThiI family.

The protein resides in the cytoplasm. It carries out the reaction [ThiI sulfur-carrier protein]-S-sulfanyl-L-cysteine + a uridine in tRNA + 2 reduced [2Fe-2S]-[ferredoxin] + ATP + H(+) = [ThiI sulfur-carrier protein]-L-cysteine + a 4-thiouridine in tRNA + 2 oxidized [2Fe-2S]-[ferredoxin] + AMP + diphosphate. The catalysed reaction is [ThiS sulfur-carrier protein]-C-terminal Gly-Gly-AMP + S-sulfanyl-L-cysteinyl-[cysteine desulfurase] + AH2 = [ThiS sulfur-carrier protein]-C-terminal-Gly-aminoethanethioate + L-cysteinyl-[cysteine desulfurase] + A + AMP + 2 H(+). The protein operates within cofactor biosynthesis; thiamine diphosphate biosynthesis. Functionally, catalyzes the ATP-dependent transfer of a sulfur to tRNA to produce 4-thiouridine in position 8 of tRNAs, which functions as a near-UV photosensor. Also catalyzes the transfer of sulfur to the sulfur carrier protein ThiS, forming ThiS-thiocarboxylate. This is a step in the synthesis of thiazole, in the thiamine biosynthesis pathway. The sulfur is donated as persulfide by IscS. This is Probable tRNA sulfurtransferase from Bacillus cereus (strain AH187).